Here is a 131-residue protein sequence, read N- to C-terminus: Large ribosomal subunit protein bL12 (131 aa).

The protein belongs to the bacterial ribosomal protein bL12 family. As to quaternary structure, homodimer. Part of the ribosomal stalk of the 50S ribosomal subunit. Forms a multimeric L10(L12)X complex, where L10 forms an elongated spine to which 2 to 4 L12 dimers bind in a sequential fashion. Binds GTP-bound translation factors.

In terms of biological role, forms part of the ribosomal stalk which helps the ribosome interact with GTP-bound translation factors. Is thus essential for accurate translation. The sequence is that of Large ribosomal subunit protein bL12 from Prochlorococcus marinus (strain MIT 9515).